Reading from the N-terminus, the 167-residue chain is MTDTPTRIYVDADACPVKDEIYRVALRHSVPVSVVAGNFIRVPQDPLIERIAAGAGMDAADDWIAERARPGDVVVTSDIPLASRCVKAGADVIAPNGKPFTEQSIGMTLAVRNLMTDLRSAGEVTGGPRSFAPRDRSTFLSALDQTLRRIQRRRIDAAATSQNSSQG.

The protein belongs to the UPF0178 family.

This Bradyrhizobium diazoefficiens (strain JCM 10833 / BCRC 13528 / IAM 13628 / NBRC 14792 / USDA 110) protein is UPF0178 protein bll3966.